We begin with the raw amino-acid sequence, 485 residues long: Ribulose bisphosphate carboxylase large chain (485 aa).

2 residues coordinate substrate: Asn-124 and Thr-174. The Proton acceptor role is filled by Lys-176. Lys-178 contributes to the substrate binding site. Lys-202, Asp-204, and Glu-205 together coordinate Mg(2+). The residue at position 202 (Lys-202) is an N6-carboxylysine. The Proton acceptor role is filled by His-294. Residues Arg-295, His-327, and Ser-379 each coordinate substrate.

The protein belongs to the RuBisCO large chain family. Type I subfamily. In terms of assembly, heterohexadecamer of 8 large chains and 8 small chains. Mg(2+) serves as cofactor.

The catalysed reaction is 2 (2R)-3-phosphoglycerate + 2 H(+) = D-ribulose 1,5-bisphosphate + CO2 + H2O. It carries out the reaction D-ribulose 1,5-bisphosphate + O2 = 2-phosphoglycolate + (2R)-3-phosphoglycerate + 2 H(+). In terms of biological role, ruBisCO catalyzes two reactions: the carboxylation of D-ribulose 1,5-bisphosphate, the primary event in carbon dioxide fixation, as well as the oxidative fragmentation of the pentose substrate. Both reactions occur simultaneously and in competition at the same active site. The chain is Ribulose bisphosphate carboxylase large chain from Rhodopseudomonas palustris (strain TIE-1).